The sequence spans 1156 residues: Mastermind-like protein 2 (1156 aa).

A disordered region spans residues Gln-81–Arg-165. Over residues Pro-113 to Ala-122 the composition is skewed to low complexity. The span at Glu-153 to Arg-165 shows a compositional bias: polar residues. Ser-175 is modified (phosphoserine). Disordered stretches follow at residues Phe-340–Met-359, Ser-369–Gln-506, Gln-531–Gln-630, Gln-658–Leu-680, Tyr-705–Asn-743, Ile-784–Gly-820, and Leu-1059–Thr-1100. Composition is skewed to polar residues over residues Leu-344–Arg-354, Gly-371–Pro-380, Met-393–Gly-419, and Gln-428–Lys-437. Residues Ala-440 to Pro-470 show a composition bias toward low complexity. Composition is skewed to polar residues over residues Ser-484–Pro-496, Gln-532–Asn-543, and Asn-563–Thr-587. Over residues Gln-588–Gln-630 the composition is skewed to low complexity. Composition is skewed to low complexity over residues Gln-706 to Pro-725 and Ser-733 to Asn-743. Residues Asn-807–Gly-820 show a composition bias toward polar residues.

The protein belongs to the mastermind family. In terms of assembly, interacts through its N-terminal region with the ankyrin repeat region of the Notch proteins NOTCH1, NOTCH2, NOTCH3 and NOTCH4. Forms a DNA-binding complex with Notch proteins and RBPSUH/RBP-J kappa. As to expression, widely expressed with high levels detected in placenta, salivary gland and skeletal muscle.

Its subcellular location is the nucleus speckle. Functionally, acts as a transcriptional coactivator for NOTCH proteins. Has been shown to amplify NOTCH-induced transcription of HES1. Potentiates activation by NOTCH3 and NOTCH4 more efficiently than MAML1 or MAML3. In Homo sapiens (Human), this protein is Mastermind-like protein 2 (MAML2).